The sequence spans 419 residues: L-rhamnose isomerase (419 aa).

Mn(2+)-binding residues include His-262, Asp-294, and Asp-296.

Belongs to the rhamnose isomerase family. As to quaternary structure, homotetramer. The cofactor is Mn(2+).

It localises to the cytoplasm. The enzyme catalyses L-rhamnopyranose = L-rhamnulose. It participates in carbohydrate degradation; L-rhamnose degradation; glycerone phosphate from L-rhamnose: step 1/3. Catalyzes the interconversion of L-rhamnose and L-rhamnulose. The sequence is that of L-rhamnose isomerase from Escherichia coli O139:H28 (strain E24377A / ETEC).